We begin with the raw amino-acid sequence, 152 residues long: UPF0266 membrane protein YobD (152 aa).

The next 3 membrane-spanning stretches (helical) occupy residues 6-26 (LVLILFIAALLAFAIYDQFIM), 45-65 (IDSVIFVGLIVILIYNNVTNH), and 67-87 (AQITTWLLSALALMGFYIFWI).

Belongs to the UPF0266 family.

The protein resides in the cell inner membrane. The chain is UPF0266 membrane protein YobD from Escherichia fergusonii (strain ATCC 35469 / DSM 13698 / CCUG 18766 / IAM 14443 / JCM 21226 / LMG 7866 / NBRC 102419 / NCTC 12128 / CDC 0568-73).